The primary structure comprises 397 residues: Chorismate synthase (397 aa).

NADP(+) contacts are provided by R40 and R46. FMN contacts are provided by residues 129 to 131, 257 to 258, G302, 317 to 321, and R343; these read RSS, QA, and KPISS.

The protein belongs to the chorismate synthase family. Homotetramer. Requires FMNH2 as cofactor.

It carries out the reaction 5-O-(1-carboxyvinyl)-3-phosphoshikimate = chorismate + phosphate. It functions in the pathway metabolic intermediate biosynthesis; chorismate biosynthesis; chorismate from D-erythrose 4-phosphate and phosphoenolpyruvate: step 7/7. In terms of biological role, catalyzes the anti-1,4-elimination of the C-3 phosphate and the C-6 proR hydrogen from 5-enolpyruvylshikimate-3-phosphate (EPSP) to yield chorismate, which is the branch point compound that serves as the starting substrate for the three terminal pathways of aromatic amino acid biosynthesis. This reaction introduces a second double bond into the aromatic ring system. In Chlorobium phaeovibrioides (strain DSM 265 / 1930) (Prosthecochloris vibrioformis (strain DSM 265)), this protein is Chorismate synthase.